The following is a 98-amino-acid chain: NADH-ubiquinone oxidoreductase chain 4L (98 aa).

The next 3 membrane-spanning stretches (helical) occupy residues 1–21 (MPYIYTNLFLAFLTSLLGMLI), 29–49 (SLLCLEGMMLSMFIMTSLTIL), and 61–81 (IILLVFAACEAAVGLALLVMV).

Belongs to the complex I subunit 4L family. As to quaternary structure, core subunit of respiratory chain NADH dehydrogenase (Complex I) which is composed of 45 different subunits.

It localises to the mitochondrion inner membrane. It catalyses the reaction a ubiquinone + NADH + 5 H(+)(in) = a ubiquinol + NAD(+) + 4 H(+)(out). Core subunit of the mitochondrial membrane respiratory chain NADH dehydrogenase (Complex I) which catalyzes electron transfer from NADH through the respiratory chain, using ubiquinone as an electron acceptor. Part of the enzyme membrane arm which is embedded in the lipid bilayer and involved in proton translocation. This chain is NADH-ubiquinone oxidoreductase chain 4L (MT-ND4L), found in Cephalopachus bancanus (Western tarsier).